The primary structure comprises 224 residues: Attacin-A (224 aa).

Positions 1–20 are cleaved as a signal peptide; it reads MQKTSILIVALVALFAITEA. A propeptide spanning residues 21–34 is cleaved from the precursor; sequence LPSLPTTGPIRVRR.

It belongs to the attacin/sarcotoxin-2 family. As to expression, hemolymph (at protein level).

The protein resides in the secreted. Hemolymph antibacterial protein. The sequence is that of Attacin-A (AttA) from Drosophila melanogaster (Fruit fly).